The following is a 390-amino-acid chain: 23S rRNA (uracil(747)-C(5))-methyltransferase RlmC (390 aa).

[4Fe-4S] cluster-binding residues include C12, C20, C23, and C100. Residues Q225, F254, E275, and N322 each coordinate S-adenosyl-L-methionine. Catalysis depends on C349, which acts as the Nucleophile.

It belongs to the class I-like SAM-binding methyltransferase superfamily. RNA M5U methyltransferase family. RlmC subfamily.

The catalysed reaction is uridine(747) in 23S rRNA + S-adenosyl-L-methionine = 5-methyluridine(747) in 23S rRNA + S-adenosyl-L-homocysteine + H(+). In terms of biological role, catalyzes the formation of 5-methyl-uridine at position 747 (m5U747) in 23S rRNA. The protein is 23S rRNA (uracil(747)-C(5))-methyltransferase RlmC of Shewanella baltica (strain OS185).